Here is a 564-residue protein sequence, read N- to C-terminus: Urease subunit alpha (564 aa).

The Urease domain occupies 126–564; sequence GGIDTHIHFI…LPMAQRYFLF (439 aa). Ni(2+)-binding residues include His-131, His-133, and Lys-214. The residue at position 214 (Lys-214) is an N6-carboxylysine. His-216 lines the substrate pocket. Ni(2+) contacts are provided by His-243 and His-269. His-317 serves as the catalytic Proton donor. Position 357 (Asp-357) interacts with Ni(2+).

The protein belongs to the metallo-dependent hydrolases superfamily. Urease alpha subunit family. Heterotrimer of UreA (gamma), UreB (beta) and UreC (alpha) subunits. Three heterotrimers associate to form the active enzyme. Ni cation serves as cofactor. In terms of processing, carboxylation allows a single lysine to coordinate two nickel ions.

The protein resides in the cytoplasm. The enzyme catalyses urea + 2 H2O + H(+) = hydrogencarbonate + 2 NH4(+). It functions in the pathway nitrogen metabolism; urea degradation; CO(2) and NH(3) from urea (urease route): step 1/1. In Burkholderia thailandensis (strain ATCC 700388 / DSM 13276 / CCUG 48851 / CIP 106301 / E264), this protein is Urease subunit alpha.